The sequence spans 136 residues: Large ribosomal subunit protein bL17 (136 aa).

This sequence belongs to the bacterial ribosomal protein bL17 family. As to quaternary structure, part of the 50S ribosomal subunit. Contacts protein L32.

The polypeptide is Large ribosomal subunit protein bL17 (Rickettsia peacockii (strain Rustic)).